Consider the following 365-residue polypeptide: Aminomethyltransferase (365 aa).

It belongs to the GcvT family. In terms of assembly, the glycine cleavage system is composed of four proteins: P, T, L and H.

The catalysed reaction is N(6)-[(R)-S(8)-aminomethyldihydrolipoyl]-L-lysyl-[protein] + (6S)-5,6,7,8-tetrahydrofolate = N(6)-[(R)-dihydrolipoyl]-L-lysyl-[protein] + (6R)-5,10-methylene-5,6,7,8-tetrahydrofolate + NH4(+). The glycine cleavage system catalyzes the degradation of glycine. The chain is Aminomethyltransferase from Cronobacter sakazakii (strain ATCC BAA-894) (Enterobacter sakazakii).